Here is a 362-residue protein sequence, read N- to C-terminus: GDSL esterase/lipase At5g18430 (362 aa).

Positions 1–19 are cleaved as a signal peptide; it reads MTISTVIAFMSMFLVFVMS. Serine 35 functions as the Nucleophile in the catalytic mechanism. The N-linked (GlcNAc...) asparagine glycan is linked to asparagine 117. Residues aspartate 327 and histidine 330 contribute to the active site. A glycan (N-linked (GlcNAc...) asparagine) is linked at asparagine 355.

This sequence belongs to the 'GDSL' lipolytic enzyme family.

The protein resides in the secreted. The polypeptide is GDSL esterase/lipase At5g18430 (Arabidopsis thaliana (Mouse-ear cress)).